We begin with the raw amino-acid sequence, 210 residues long: Putative polysaccharide-binding protein (210 aa).

A signal peptide spans 1-22; that stretch reads MGFLKGTAAALTLLSAAAAASA. 4 CBM1 domains span residues 23-62, 63-105, 125-165, and 166-210; these read CGVL…AMPG, MMGQ…LANK, CGKE…APPP, and KMGE…PMHP.

The chain is Putative polysaccharide-binding protein from Porphyra purpurea (Red seaweed).